The primary structure comprises 262 residues: Regulatory protein RecX (262 aa).

The protein belongs to the RecX family.

It localises to the cytoplasm. Functionally, modulates RecA activity. This chain is Regulatory protein RecX, found in Photobacterium profundum (strain SS9).